We begin with the raw amino-acid sequence, 236 residues long: Biosynthetic peptidoglycan transglycosylase (236 aa).

The chain crosses the membrane as a helical span at residues 12-31 (ALLWFAAGSVLVVLVLRWVP).

This sequence belongs to the glycosyltransferase 51 family.

The protein resides in the cell inner membrane. The enzyme catalyses [GlcNAc-(1-&gt;4)-Mur2Ac(oyl-L-Ala-gamma-D-Glu-L-Lys-D-Ala-D-Ala)](n)-di-trans,octa-cis-undecaprenyl diphosphate + beta-D-GlcNAc-(1-&gt;4)-Mur2Ac(oyl-L-Ala-gamma-D-Glu-L-Lys-D-Ala-D-Ala)-di-trans,octa-cis-undecaprenyl diphosphate = [GlcNAc-(1-&gt;4)-Mur2Ac(oyl-L-Ala-gamma-D-Glu-L-Lys-D-Ala-D-Ala)](n+1)-di-trans,octa-cis-undecaprenyl diphosphate + di-trans,octa-cis-undecaprenyl diphosphate + H(+). It participates in cell wall biogenesis; peptidoglycan biosynthesis. Functionally, peptidoglycan polymerase that catalyzes glycan chain elongation from lipid-linked precursors. The sequence is that of Biosynthetic peptidoglycan transglycosylase from Pseudomonas savastanoi pv. phaseolicola (strain 1448A / Race 6) (Pseudomonas syringae pv. phaseolicola (strain 1448A / Race 6)).